The sequence spans 685 residues: MIGKILGNRYELLQCVGEGGMSFVYKARCRKLNRFVAVKILKDEFKNNEEIVRRFKKEATAIANLSNPNVVNVLDVGTQDDINYIVMEYVEGKTLKDIIKEKGALPYEVAISIGIKVAKALECAHKSGIIHRDVKPQNILVTEEGVVKVTDFGIAKSMDSSTIAHTNSVMGSAHYFSPEQAKGTYTDYRTDLYSLGIVLYEMVTGVVPFNGDSPVTVAVKHIQEKAIPPKNINQNIPNSLNDLIMKAMEKDPVNRYQTAKEIIGDLEKIKKDPNVTISSKSAEDEDQFTRVMSPVVVPNTETNNSEPDEDDEDDDEYYEDDEDEDEEENNIQTKPQKAINKNKKKSPILIIIATILVVALGITLGFLGMKKFMEGGKDVKIPNVVGEKVEDAKSKLEGLGLKVLEVTEESDQEKGIVLKVDPNVDSTVKTGSEVKLTVSGGEGQIKVPNFAEMNLDSVKRTLKSLGLELGSVDEEYSDSVPRGEVISQSPNANESVDKGSKVNVTISKGKEIKSETINIPDVSGKSVEEAKSILANAGVGVNPVKGEAAKSEGEAGKVYSQSQSGSLTIKQGEKVTITINYYGDYVKPEKPKHNAGELVGMTGAQAKAWASKNKINVSGITSDTAKVKSVSNSGEVEEGGSVSVTMEEEKKPEQPTQPNQPTQPTQPNQQAQPEQPKQPEQSGNN.

Residues 10 to 275 (YELLQCVGEG…LEKIKKDPNV (266 aa)) enclose the Protein kinase domain. ATP-binding positions include 16 to 24 (VGEGGMSFV) and Lys39. Glu143 acts as the Proton acceptor in catalysis. The disordered stretch occupies residues 277–339 (ISSKSAEDED…NIQTKPQKAI (63 aa)). The span at 306-329 (EPDEDDEDDDEYYEDDEDEDEEEN) shows a compositional bias: acidic residues. 4 PASTA domains span residues 376–440 (GKDV…TVSG), 441–508 (GEGQ…TISK), 513–581 (KSET…TINY), and 589–648 (EKPK…TMEE). The tract at residues 480-500 (VPRGEVISQSPNANESVDKGS) is disordered. The interval 623–685 (DTAKVKSVSN…PKQPEQSGNN (63 aa)) is disordered. Composition is skewed to low complexity over residues 627-645 (VKSVSNSGEVEEGGSVSVT) and 654-685 (QPTQPNQPTQPTQPNQQAQPEQPKQPEQSGNN).

This sequence belongs to the protein kinase superfamily. Ser/Thr protein kinase family.

The catalysed reaction is L-seryl-[protein] + ATP = O-phospho-L-seryl-[protein] + ADP + H(+). The enzyme catalyses L-threonyl-[protein] + ATP = O-phospho-L-threonyl-[protein] + ADP + H(+). This Clostridium perfringens (strain 13 / Type A) protein is Probable serine/threonine-protein kinase CPE1738.